Here is a 336-residue protein sequence, read N- to C-terminus: Opsin-1, short-wave-sensitive 1 (336 aa).

Residues 1-29 (MDAWAVQFGNASKVSPFEGEQYHIAPKWA) lie on the Extracellular side of the membrane. N-linked (GlcNAc...) asparagine glycosylation is present at N10. Residues 30-54 (FYLQAAFMGFVFIVGTPMNGIVLFV) traverse the membrane as a helical segment. At 55 to 66 (TMKYKKLRQPLN) the chain is on the cytoplasmic side. The chain crosses the membrane as a helical span at residues 67–91 (YILVNISLAGFIFDTFSVSQVFVCA). The Extracellular portion of the chain corresponds to 92–106 (ARGYYFLGYTLCAME). Cysteines 103 and 180 form a disulfide. A helical membrane pass occupies residues 107–126 (AAMGSIAGLVTGWSLAVLAF). At 127-145 (ERYVVICKPFGSFKFGQGQ) the chain is on the cytoplasmic side. A helical membrane pass occupies residues 146-169 (AVGAVVFTWIIGTACATPPFFGWS). The Extracellular portion of the chain corresponds to 170 to 195 (RYIPEGLGTACGPDWYTKSEEYNSES). A helical membrane pass occupies residues 196 to 223 (YTYFLLITCFMMPMTIIIFSYSQLLGAL). Topologically, residues 224 to 245 (RAVAAQQAESESTQKAEREVSR) are cytoplasmic. A helical transmembrane segment spans residues 246 to 269 (MVVVMVGSFVLCYAPYAVTAMYFA). Residues 270–277 (NSDEPNKD) are Extracellular-facing. Residues 278 to 302 (YRLVAIPAFFSKSSCVYNPLIYAFM) form a helical membrane-spanning segment. K289 is modified (N6-(retinylidene)lysine). Residues 303–336 (NKQFNACIMETVFGKKIDESSEVSSKTETSSVSA) lie on the Cytoplasmic side of the membrane.

It belongs to the G-protein coupled receptor 1 family. Opsin subfamily. In terms of processing, phosphorylated on some or all of the serine and threonine residues present in the C-terminal region. Retinal short single cones, outer and inner segments.

The protein resides in the membrane. In terms of biological role, visual pigments are the light-absorbing molecules that mediate vision. They consist of an apoprotein, opsin, covalently linked to cis-retinal. The polypeptide is Opsin-1, short-wave-sensitive 1 (opn1sw1) (Danio rerio (Zebrafish)).